We begin with the raw amino-acid sequence, 237 residues long: uncharacterized protein (237 aa).

This is an uncharacterized protein from Methanocaldococcus jannaschii (strain ATCC 43067 / DSM 2661 / JAL-1 / JCM 10045 / NBRC 100440) (Methanococcus jannaschii).